A 191-amino-acid chain; its full sequence is UMP-CMP kinase 2 (191 aa).

Residue 12–17 participates in ATP binding; it reads GSGKGT. Residues 32–62 are NMP; that stretch reads SAGDLLRAERQREGSEFGALIESHIKNGSIV. Residues Arg38, 60 to 62, and 88 to 91 contribute to the a ribonucleoside 5'-phosphate site; these read SIV and GFPR. Asn95 contacts CMP. Positions 128-136 are LID; the sequence is NRGQGRTDD. ATP is bound at residue Arg129. A ribonucleoside 5'-phosphate-binding residues include Arg133 and Arg144. Arg172 contacts ATP.

Belongs to the adenylate kinase family. UMP-CMP kinase subfamily. Monomer. The cofactor is Mg(2+). In terms of tissue distribution, expressed in neurons and the pharynx.

It localises to the cytoplasm. The protein localises to the nucleus. It carries out the reaction CMP + ATP = CDP + ADP. The enzyme catalyses dCMP + ATP = dCDP + ADP. The catalysed reaction is UMP + ATP = UDP + ADP. Functionally, catalyzes the phosphorylation of pyrimidine nucleoside monophosphates at the expense of ATP. Plays an important role in de novo pyrimidine nucleotide biosynthesis. Has preference for UMP and CMP as phosphate acceptors. The sequence is that of UMP-CMP kinase 2 from Caenorhabditis elegans.